The following is a 346-amino-acid chain: Biotin synthase (346 aa).

The segment covering 1-12 has biased composition (polar residues); sequence MPDTATVSSESE. Residues 1–21 form a disordered region; the sequence is MPDTATVSSESEFSGHAHVAA. One can recognise a Radical SAM core domain in the interval 64-292; that stretch reads NKVQLCSLLS…QSMVRLSAGR (229 aa). [4Fe-4S] cluster is bound by residues C79, C83, and C86. Residues C123, C155, C215, and R287 each coordinate [2Fe-2S] cluster.

Belongs to the radical SAM superfamily. Biotin synthase family. In terms of assembly, homodimer. It depends on [4Fe-4S] cluster as a cofactor. Requires [2Fe-2S] cluster as cofactor.

The catalysed reaction is (4R,5S)-dethiobiotin + (sulfur carrier)-SH + 2 reduced [2Fe-2S]-[ferredoxin] + 2 S-adenosyl-L-methionine = (sulfur carrier)-H + biotin + 2 5'-deoxyadenosine + 2 L-methionine + 2 oxidized [2Fe-2S]-[ferredoxin]. Its pathway is cofactor biosynthesis; biotin biosynthesis; biotin from 7,8-diaminononanoate: step 2/2. Functionally, catalyzes the conversion of dethiobiotin (DTB) to biotin by the insertion of a sulfur atom into dethiobiotin via a radical-based mechanism. The polypeptide is Biotin synthase (Myxococcus xanthus (strain DK1622)).